Reading from the N-terminus, the 220-residue chain is Probable L-serine dehydratase, beta chain (220 aa).

Positions A148–D220 constitute an ACT domain.

This sequence belongs to the iron-sulfur dependent L-serine dehydratase family. In terms of assembly, heterodimer of an alpha chain and a beta chain. [4Fe-4S] cluster serves as cofactor.

The enzyme catalyses L-serine = pyruvate + NH4(+). The protein operates within carbohydrate biosynthesis; gluconeogenesis. The polypeptide is Probable L-serine dehydratase, beta chain (sdaAB) (Bacillus subtilis (strain 168)).